A 555-amino-acid chain; its full sequence is Suppressor of tumorigenicity 7 protein-like (555 aa).

Transmembrane regions (helical) follow at residues 32–52, 76–96, 504–524, and 531–551; these read APWARGLLAVAAGLGLFYAAL, FYFALTVTSSFISGLIFVFEW, LPFFIHFTAGLCSFSAMLALL, and LMVVFAKAVLRVLWPVSAPSV.

Belongs to the ST7 family.

It is found in the membrane. In Gallus gallus (Chicken), this protein is Suppressor of tumorigenicity 7 protein-like (ST7L).